We begin with the raw amino-acid sequence, 187 residues long: Acetyl-CoA decarbonylase/synthase complex subunit epsilon (187 aa).

A Blocked amino end (Met) modification is found at M1.

The protein belongs to the CdhB family. As to quaternary structure, heterotetramer of two alpha and two epsilon subunits. The ACDS complex is made up of alpha, epsilon, beta, gamma and delta subunits with a probable stoichiometry of (alpha(2)epsilon(2))(4)-beta(8)-(gamma(1)delta(1))(8).

In terms of biological role, part of a complex that catalyzes the reversible cleavage of acetyl-CoA, allowing autotrophic growth from CO(2). The alpha-epsilon subcomponent functions as a carbon monoxide dehydrogenase. The precise role of the epsilon subunit is unclear; it may have a stabilizing role within the alpha(2)epsilon(2) component and/or be involved in electron transfer to FAD during a potential FAD-mediated CO oxidation. The protein is Acetyl-CoA decarbonylase/synthase complex subunit epsilon of Methanothrix soehngenii (Methanosaeta concilii).